A 224-amino-acid polypeptide reads, in one-letter code: Putative O-methyltransferase MT1258 (224 aa).

Residues 1–10 show a composition bias toward basic and acidic residues; sequence MDGTPGHDDM. Residues 1–21 are disordered; that stretch reads MDGTPGHDDMPGQPAPSRGES. Residues V51, E73, 75 to 76, S81, D99, and I100 each bind S-adenosyl-L-methionine; that span reads GT. Position 147 (D147) interacts with substrate. Residue D149 coordinates S-adenosyl-L-methionine.

It belongs to the class I-like SAM-binding methyltransferase superfamily. Cation-dependent O-methyltransferase family.

In Mycobacterium tuberculosis (strain CDC 1551 / Oshkosh), this protein is Putative O-methyltransferase MT1258.